Consider the following 428-residue polypeptide: Enolase (428 aa).

A (2R)-2-phosphoglycerate-binding site is contributed by Gln-163. Glu-205 functions as the Proton donor in the catalytic mechanism. 3 residues coordinate Mg(2+): Asp-242, Glu-283, and Asp-310. Residues Lys-335, Arg-364, Ser-365, and Lys-386 each coordinate (2R)-2-phosphoglycerate. Residue Lys-335 is the Proton acceptor of the active site.

This sequence belongs to the enolase family. It depends on Mg(2+) as a cofactor.

The protein resides in the cytoplasm. It localises to the secreted. Its subcellular location is the cell surface. It carries out the reaction (2R)-2-phosphoglycerate = phosphoenolpyruvate + H2O. The protein operates within carbohydrate degradation; glycolysis; pyruvate from D-glyceraldehyde 3-phosphate: step 4/5. In terms of biological role, catalyzes the reversible conversion of 2-phosphoglycerate (2-PG) into phosphoenolpyruvate (PEP). It is essential for the degradation of carbohydrates via glycolysis. In Saccharopolyspora erythraea (strain ATCC 11635 / DSM 40517 / JCM 4748 / NBRC 13426 / NCIMB 8594 / NRRL 2338), this protein is Enolase.